Here is a 292-residue protein sequence, read N- to C-terminus: Probable 2-(5''-triphosphoribosyl)-3'-dephosphocoenzyme-A synthase (292 aa).

It belongs to the CitG/MdcB family.

It catalyses the reaction 3'-dephospho-CoA + ATP = 2'-(5''-triphospho-alpha-D-ribosyl)-3'-dephospho-CoA + adenine. This chain is Probable 2-(5''-triphosphoribosyl)-3'-dephosphocoenzyme-A synthase, found in Shigella flexneri.